Here is a 238-residue protein sequence, read N- to C-terminus: Ribonuclease PH (238 aa).

Residues Arg86 and 124–126 each bind phosphate; that span reads GTR.

The protein belongs to the RNase PH family. In terms of assembly, homohexameric ring arranged as a trimer of dimers.

It catalyses the reaction tRNA(n+1) + phosphate = tRNA(n) + a ribonucleoside 5'-diphosphate. Phosphorolytic 3'-5' exoribonuclease that plays an important role in tRNA 3'-end maturation. Removes nucleotide residues following the 3'-CCA terminus of tRNAs; can also add nucleotides to the ends of RNA molecules by using nucleoside diphosphates as substrates, but this may not be physiologically important. Probably plays a role in initiation of 16S rRNA degradation (leading to ribosome degradation) during starvation. This is Ribonuclease PH from Shigella flexneri serotype 5b (strain 8401).